The sequence spans 247 residues: Uridylate kinase (247 aa).

Residue 19–22 (KISG) participates in ATP binding. Gly-61 serves as a coordination point for UMP. ATP is bound by residues Gly-62 and Arg-66. Residues Asp-81 and 142–149 (TGNPFFTT) contribute to the UMP site. Thr-169, Gln-170, Tyr-175, and Asp-178 together coordinate ATP.

This sequence belongs to the UMP kinase family. As to quaternary structure, homohexamer.

It localises to the cytoplasm. It carries out the reaction UMP + ATP = UDP + ADP. The protein operates within pyrimidine metabolism; CTP biosynthesis via de novo pathway; UDP from UMP (UMPK route): step 1/1. Inhibited by UTP. In terms of biological role, catalyzes the reversible phosphorylation of UMP to UDP. The chain is Uridylate kinase from Wolbachia pipientis wMel.